We begin with the raw amino-acid sequence, 256 residues long: Adenylate kinase (256 aa).

49-54 (GAGKGT) provides a ligand contact to ATP. The segment at 69-98 (ATGDMLRDQVEKKTPLGIAAKKIMDAGGLV) is NMP. Residues Thr70, Arg75, 96-98 (GLV), 125-128 (GFPR), and Gln132 contribute to the AMP site. The segment at 166 to 203 (GRLIHPASGRSYHKIFNPPKKAGIDDLTGEPLIQRSDD) is LID. Residues Arg167 and 176 to 177 (SY) contribute to the ATP site. Residues Arg200 and Arg211 each contribute to the AMP site. Residue Gln239 coordinates ATP.

The protein belongs to the adenylate kinase family. AK2 subfamily. As to quaternary structure, monomer.

Its subcellular location is the cytoplasm. The protein localises to the cytosol. It is found in the mitochondrion intermembrane space. The catalysed reaction is AMP + ATP = 2 ADP. In terms of biological role, catalyzes the reversible transfer of the terminal phosphate group between ATP and AMP. Plays an important role in cellular energy homeostasis and in adenine nucleotide metabolism. Adenylate kinase activity is critical for regulation of the phosphate utilization and the AMP de novo biosynthesis pathways. This is Adenylate kinase from Coprinopsis cinerea (strain Okayama-7 / 130 / ATCC MYA-4618 / FGSC 9003) (Inky cap fungus).